A 361-amino-acid chain; its full sequence is tRNA/tmRNA (uracil-C(5))-methyltransferase (361 aa).

S-adenosyl-L-methionine-binding residues include glutamine 183, tyrosine 211, asparagine 216, glutamate 232, and aspartate 294. Cysteine 319 serves as the catalytic Nucleophile. Glutamate 353 acts as the Proton acceptor in catalysis.

It belongs to the class I-like SAM-binding methyltransferase superfamily. RNA M5U methyltransferase family. TrmA subfamily.

It catalyses the reaction uridine(54) in tRNA + S-adenosyl-L-methionine = 5-methyluridine(54) in tRNA + S-adenosyl-L-homocysteine + H(+). It carries out the reaction uridine(341) in tmRNA + S-adenosyl-L-methionine = 5-methyluridine(341) in tmRNA + S-adenosyl-L-homocysteine + H(+). Its function is as follows. Dual-specificity methyltransferase that catalyzes the formation of 5-methyluridine at position 54 (m5U54) in all tRNAs, and that of position 341 (m5U341) in tmRNA (transfer-mRNA). The sequence is that of tRNA/tmRNA (uracil-C(5))-methyltransferase from Acinetobacter baumannii (strain AB307-0294).